The primary structure comprises 488 residues: Protein nucleotidyltransferase YdiU (488 aa).

ATP contacts are provided by glycine 91, glycine 93, arginine 94, lysine 114, aspartate 126, glycine 127, arginine 177, and arginine 184. The Proton acceptor role is filled by aspartate 253. Mg(2+) contacts are provided by asparagine 254 and aspartate 263. Aspartate 263 contributes to the ATP binding site.

This sequence belongs to the SELO family. The cofactor is Mg(2+). Requires Mn(2+) as cofactor.

It carries out the reaction L-seryl-[protein] + ATP = 3-O-(5'-adenylyl)-L-seryl-[protein] + diphosphate. It catalyses the reaction L-threonyl-[protein] + ATP = 3-O-(5'-adenylyl)-L-threonyl-[protein] + diphosphate. The catalysed reaction is L-tyrosyl-[protein] + ATP = O-(5'-adenylyl)-L-tyrosyl-[protein] + diphosphate. The enzyme catalyses L-histidyl-[protein] + UTP = N(tele)-(5'-uridylyl)-L-histidyl-[protein] + diphosphate. It carries out the reaction L-seryl-[protein] + UTP = O-(5'-uridylyl)-L-seryl-[protein] + diphosphate. It catalyses the reaction L-tyrosyl-[protein] + UTP = O-(5'-uridylyl)-L-tyrosyl-[protein] + diphosphate. Nucleotidyltransferase involved in the post-translational modification of proteins. It can catalyze the addition of adenosine monophosphate (AMP) or uridine monophosphate (UMP) to a protein, resulting in modifications known as AMPylation and UMPylation. In Bacillus thuringiensis subsp. konkukian (strain 97-27), this protein is Protein nucleotidyltransferase YdiU.